A 203-amino-acid polypeptide reads, in one-letter code: dITP/XTP pyrophosphatase (203 aa).

Residue 8-13 (TANKGK) coordinates substrate. 2 residues coordinate Mg(2+): E41 and D70. The active-site Proton acceptor is D70. Residues S71, 153–156 (FGYD), K176, and 181–182 (HR) contribute to the substrate site.

The protein belongs to the HAM1 NTPase family. As to quaternary structure, homodimer. Mg(2+) is required as a cofactor.

The catalysed reaction is XTP + H2O = XMP + diphosphate + H(+). It catalyses the reaction dITP + H2O = dIMP + diphosphate + H(+). The enzyme catalyses ITP + H2O = IMP + diphosphate + H(+). Pyrophosphatase that catalyzes the hydrolysis of nucleoside triphosphates to their monophosphate derivatives, with a high preference for the non-canonical purine nucleotides XTP (xanthosine triphosphate), dITP (deoxyinosine triphosphate) and ITP. Seems to function as a house-cleaning enzyme that removes non-canonical purine nucleotides from the nucleotide pool, thus preventing their incorporation into DNA/RNA and avoiding chromosomal lesions. This Listeria innocua serovar 6a (strain ATCC BAA-680 / CLIP 11262) protein is dITP/XTP pyrophosphatase.